The primary structure comprises 157 residues: Glutathione peroxidase homolog BsaA (157 aa).

Cysteine 35 is an active-site residue.

The protein belongs to the glutathione peroxidase family.

This Halalkalibacterium halodurans (strain ATCC BAA-125 / DSM 18197 / FERM 7344 / JCM 9153 / C-125) (Bacillus halodurans) protein is Glutathione peroxidase homolog BsaA (bsaA).